The chain runs to 177 residues: 3-hydroxydecanoyl-[acyl-carrier-protein] dehydratase (177 aa).

Residue H71 is part of the active site.

This sequence belongs to the thioester dehydratase family. FabA subfamily. Homodimer.

Its subcellular location is the cytoplasm. The catalysed reaction is a (3R)-hydroxyacyl-[ACP] = a (2E)-enoyl-[ACP] + H2O. It catalyses the reaction (3R)-hydroxydecanoyl-[ACP] = (2E)-decenoyl-[ACP] + H2O. It carries out the reaction (2E)-decenoyl-[ACP] = (3Z)-decenoyl-[ACP]. It participates in lipid metabolism; fatty acid biosynthesis. Necessary for the introduction of cis unsaturation into fatty acids. Catalyzes the dehydration of (3R)-3-hydroxydecanoyl-ACP to E-(2)-decenoyl-ACP and then its isomerization to Z-(3)-decenoyl-ACP. Can catalyze the dehydratase reaction for beta-hydroxyacyl-ACPs with saturated chain lengths up to 16:0, being most active on intermediate chain length. The polypeptide is 3-hydroxydecanoyl-[acyl-carrier-protein] dehydratase (Wigglesworthia glossinidia brevipalpis).